The following is a 58-amino-acid chain: Protein translocase subunit SecE (58 aa).

A helical membrane pass occupies residues 38-58; it reads IVMAFVGLLAYLIQLVLAFII.

The protein belongs to the SecE/SEC61-gamma family. Component of the Sec protein translocase complex. Heterotrimer consisting of SecY (alpha), SecG (beta) and SecE (gamma) subunits. The heterotrimers can form oligomers, although 1 heterotrimer is thought to be able to translocate proteins. Interacts with the ribosome. May interact with SecDF, and other proteins may be involved.

Its subcellular location is the cell membrane. Its function is as follows. Essential subunit of the Sec protein translocation channel SecYEG. Clamps together the 2 halves of SecY. May contact the channel plug during translocation. The sequence is that of Protein translocase subunit SecE from Acidianus ambivalens (Desulfurolobus ambivalens).